Consider the following 140-residue polypeptide: uncharacterized protein (140 aa).

It is found in the mitochondrion. This is an uncharacterized protein from Homo sapiens (Human).